The chain runs to 156 residues: Calglandulin (156 aa).

EF-hand domains follow at residues 8-43, 44-79, 82-117, and 118-153; these read EQIT…IGIN, PTKR…YHEK, NQDE…AGEP, and LNEH…ESFK. Ca(2+) is bound by residues Asp-131, Asp-133, Asp-135, Thr-137, and Glu-142.

The protein belongs to the calmodulin family. Calglandulin subfamily. As to expression, expressed by the venom gland.

It is found in the cytoplasm. May be involved in the cellular control mechanism of the secretion of toxins from the gland into the venom. This Hoplocephalus stephensii (Stephens's banded snake) protein is Calglandulin.